A 66-amino-acid chain; its full sequence is Transmembrane protein B66L (66 aa).

Positions 1-20 (MDIKRALILFLLFLVVLSNA) are cleaved as a signal peptide. Residues 21–40 (FVDYIISNFNHAVTCRKPTY) are Extracellular-facing. Residues 41-61 (FGIVLQGIFLVILFSIVDYLI) form a helical membrane-spanning segment. Residues 62–66 (NENIL) are Cytoplasmic-facing.

It belongs to the asfivirus B66L family.

It is found in the host membrane. The polypeptide is Transmembrane protein B66L (Ornithodoros (relapsing fever ticks)).